The following is a 1905-amino-acid chain: Transport and Golgi organization protein 1 homolog (1905 aa).

The N-terminal stretch at 1–22 (MAAAQGLLFWLLLLGPPCRVPG) is a signal peptide. The Lumenal portion of the chain corresponds to 23–1141 (QPEQDPGRRF…EPASVTPLEN (1119 aa)). The SH3 domain occupies 45–107 (MLMYRGEALE…PKDLIQVVHE (63 aa)). Basic and acidic residues predominate over residues 154–167 (SEKVKEKTAQRVEE). 2 disordered regions span residues 154 to 259 (SEKV…HEQE) and 313 to 621 (TVGK…IKDR). An N-linked (GlcNAc...) asparagine glycan is attached at Asn-173. The span at 173–190 (NESDAEPEPGEPNSEESE) shows a compositional bias: acidic residues. The span at 198-208 (AELRERSEAQK) shows a compositional bias: basic and acidic residues. Residues 209–220 (SHPQVNSQTGHA) show a composition bias toward polar residues. Phosphoserine occurs at positions 226 and 229. A compositionally biased stretch (basic and acidic residues) spans 234-245 (LQDKLKVPDSEN). The N-linked (GlcNAc...) asparagine glycan is linked to Asn-246. The span at 246-255 (NKTSNSSQVS) shows a compositional bias: polar residues. Residues 317–327 (EEEENKEDFDE) show a composition bias toward acidic residues. 2 stretches are compositionally biased toward basic and acidic residues: residues 337 to 366 (EDTK…KVEE) and 373 to 386 (KKGD…REDT). Residues 392-414 (MEGEENTDTDLESSDSKEEDDPL) are compositionally biased toward acidic residues. Basic and acidic residues-rich tracts occupy residues 419 to 436 (RLGK…KAAD) and 459 to 480 (HMKD…HEVG). Residues 467 to 527 (VEEPRRDWVQ…ANQENDLKGA (61 aa)) are a coiled coil. Residues 488-500 (DQAVQGSSQSGHL) are compositionally biased toward polar residues. Over residues 531–542 (ISKEMLHEEKPS) the composition is skewed to basic and acidic residues. Asn-627 is a glycosylation site (N-linked (GlcNAc...) asparagine). Disordered stretches follow at residues 657–908 (QQGG…PHAP), 1036–1059 (APPA…QPPL), and 1085–1118 (PVTR…TPVD). The segment covering 669–714 (VSEKRELPEEEVTRVTKDASDEGQEVRKTGQTDSIEGRGFRPKEPN) has biased composition (basic and acidic residues). Residues 715–730 (PEDEDYSPEELLEDEN) show a composition bias toward acidic residues. Basic and acidic residues-rich tracts occupy residues 736 to 751 (QSKE…RLDV), 766 to 789 (TDPE…KNET), 842 to 859 (SQKK…EGHP), and 868 to 884 (PGVE…EKFV). Ser-873 carries the phosphoserine modification. An intramembrane segment occupies 1142–1162 (AIAFIYSLVFHLTKTLLATLP). At 1163 to 1173 (DDVQPGPDFYG) the chain is on the lumenal side. The chain crosses the membrane as a helical span at residues 1174–1194 (LPWKPVLITASLGIVSFAVFF). At 1195–1905 (WRTVLAVKSR…DCSPALKQSP (711 aa)) the chain is on the cytoplasmic side. Residues 1208–1647 (VTEQQISEKL…VIVKPMPGRP (440 aa)) are mediates interaction with MIA2. The stretch at 1211–1393 (QQISEKLKNI…SQKDLEVALT (183 aa)) forms a coiled coil. The segment at 1416–1443 (SESEDQNKGGSESDELANGEVGGDRSEK) is disordered. The residue at position 1428 (Ser-1428) is a Phosphoserine. The stretch at 1484 to 1636 (NLEDQIKKLE…TQKMAMMQEE (153 aa)) forms a coiled coil. Residues 1639–1905 (IVKPMPGRPN…DCSPALKQSP (267 aa)) are disordered. The span at 1647-1664 (PNTQNPPRRGPLSQNGSF) shows a compositional bias: polar residues. 6 positions are modified to phosphoserine: Ser-1663, Ser-1675, Ser-1703, Ser-1724, Ser-1738, and Ser-1742. Residues 1748-1905 (DEGKVSMAAK…DCSPALKQSP (158 aa)) are proline-rich domain (PRD); mediates interaction with the COPII coat subunits SEC23A and SEC23B. A compositionally biased stretch (pro residues) spans 1776–1806 (LLPPIRYGPPPQLCGPFGPRPLPPPFGPGMR). An Asymmetric dimethylarginine modification is found at Arg-1781. Residues 1785-1845 (PPQLCGPFGP…GHAPFRPLGS (61 aa)) are SEC16A-interacting region (SIR); required for its localization to endoplasmic reticulum exit sites and for its interaction with SEC16A. The segment covering 1821–1831 (GKRDLPLDPRE) has biased composition (basic and acidic residues). Ser-1890 and Ser-1904 each carry phosphoserine. The segment covering 1891 to 1905 (QGASQDCSPALKQSP) has biased composition (polar residues).

The protein belongs to the MIA/OTOR family. Tango1 subfamily. In terms of assembly, interacts with MIA2. Interacts (via SH3 domain) with COL7A1. Interacts with the COPII coat subunits SEC23A, SEC23B and maybe SEC24C. May interact with APOB and MIA2. Interacts with SEC16A.

Its subcellular location is the endoplasmic reticulum membrane. In terms of biological role, plays a role in the transport of cargos that are too large to fit into COPII-coated vesicles and require specific mechanisms to be incorporated into membrane-bound carriers and exported from the endoplasmic reticulum. This protein is required for collagen VII (COL7A1) secretion by loading COL7A1 into transport carriers. It may participate in cargo loading of COL7A1 at endoplasmic reticulum exit sites by binding to COPII coat subunits Sec23/24 and guiding SH3-bound COL7A1 into a growing carrier. Does not play a role in global protein secretion and is apparently specific to COL7A1 cargo loading. However, it may participate in secretion of other proteins in cells that do not secrete COL7A1. It is also specifically required for the secretion of lipoproteins by participating in their export from the endoplasmic reticulum. Required for correct assembly of COPII coat components at endoplasmic reticulum exit sites (ERES) and for the localization of SEC16A and membrane-bound ER-resident complexes consisting of MIA2 and PREB/SEC12 to ERES. In Bos taurus (Bovine), this protein is Transport and Golgi organization protein 1 homolog.